Reading from the N-terminus, the 78-residue chain is UPF0270 protein YE3952 (78 aa).

Belongs to the UPF0270 family.

The chain is UPF0270 protein YE3952 from Yersinia enterocolitica serotype O:8 / biotype 1B (strain NCTC 13174 / 8081).